A 590-amino-acid polypeptide reads, in one-letter code: Aspartate--tRNA(Asp/Asn) ligase (590 aa).

An L-aspartate-binding site is contributed by E175. The segment at 199-202 is aspartate; it reads QQYK. L-aspartate is bound by residues R221 and H450. 221–223 is an ATP binding site; it reads RDE. ATP is bound at residue E484. R491 provides a ligand contact to L-aspartate. Position 536 to 539 (536 to 539) interacts with ATP; the sequence is GVDR.

This sequence belongs to the class-II aminoacyl-tRNA synthetase family. Type 1 subfamily. In terms of assembly, homodimer.

It is found in the cytoplasm. It carries out the reaction tRNA(Asx) + L-aspartate + ATP = L-aspartyl-tRNA(Asx) + AMP + diphosphate. Its function is as follows. Aspartyl-tRNA synthetase with relaxed tRNA specificity since it is able to aspartylate not only its cognate tRNA(Asp) but also tRNA(Asn). Reaction proceeds in two steps: L-aspartate is first activated by ATP to form Asp-AMP and then transferred to the acceptor end of tRNA(Asp/Asn). This Bradyrhizobium diazoefficiens (strain JCM 10833 / BCRC 13528 / IAM 13628 / NBRC 14792 / USDA 110) protein is Aspartate--tRNA(Asp/Asn) ligase.